The chain runs to 187 residues: Transmembrane protein 11-B, mitochondrial (187 aa).

Helical transmembrane passes span 79 to 95 (TAVL…LALP) and 102 to 119 (VSLP…LYGI).

Belongs to the TMEM11 family.

Its subcellular location is the mitochondrion inner membrane. Plays a role in mitochondrial morphogenesis. The protein is Transmembrane protein 11-B, mitochondrial (tmem11-b) of Xenopus laevis (African clawed frog).